The following is a 688-amino-acid chain: Polyphosphate kinase (688 aa).

An ATP-binding site is contributed by N45. Residues R375 and R405 each coordinate Mg(2+). The 35-residue stretch at 430-464 (PGLKIHAKLFLISRKENGEVVRYAHIGTGNFNEKT) folds into the PLD phosphodiesterase domain. Catalysis depends on H435, which acts as the Phosphohistidine intermediate. Positions 468, 564, and 592 each coordinate ATP.

The protein belongs to the polyphosphate kinase 1 (PPK1) family. Mg(2+) serves as cofactor. An intermediate of this reaction is the autophosphorylated ppk in which a phosphate is covalently linked to a histidine residue through a N-P bond.

The catalysed reaction is [phosphate](n) + ATP = [phosphate](n+1) + ADP. Functionally, catalyzes the reversible transfer of the terminal phosphate of ATP to form a long-chain polyphosphate (polyP). The chain is Polyphosphate kinase from Escherichia coli O157:H7.